The following is a 14507-amino-acid chain: Mucin-16 (14507 aa).

Over residues 1-17 the composition is skewed to low complexity; the sequence is MLKPSGLPGSSSPTRSL. A disordered region spans residues 1-138; the sequence is MLKPSGLPGS…PRTRTSSTEG (138 aa). The Extracellular segment spans residues 1-14451; that stretch reads MLKPSGLPGS…EPLTGNSDLP (14451 aa). 2 stretches are compositionally biased toward polar residues: residues 35-46 and 56-138; these read TGATLSPKTSTG and PFTS…STEG. The N-linked (GlcNAc...) asparagine glycan is linked to Asn139. 7 disordered regions span residues 160–180, 198–229, 265–287, 396–554, 655–674, 695–719, and 740–888; these read EKYT…ETPW, DSTA…TNPS, FSSP…LSSS, LGGT…STSV, VSKT…SYTM, SLGL…GHTK, and TSTF…RTTL. A compositionally biased stretch (low complexity) spans 166–178; it reads TETSTTEGDSTET. Residues 212–229 show a composition bias toward polar residues; sequence PAETTVTDSHTPGRTNPS. Low complexity-rich tracts occupy residues 276 to 287 and 396 to 413; these read SRISTSAPLSSS and LGGT…STTL. 3 stretches are compositionally biased toward polar residues: residues 414-423, 431-441, and 460-478; these read VSEETNTHHS, GTLNTSMTPLE, and GFTT…SSSH. A glycan (N-linked (GlcNAc...) asparagine) is linked at Asn434. Low complexity-rich tracts occupy residues 485 to 497 and 508 to 525; these read TTGS…SSST and ATTS…ESTA. Residues 526–543 are compositionally biased toward polar residues; that stretch reads QQFSEPQHTQWVETSPSM. 4 stretches are compositionally biased toward polar residues: residues 696-706, 740-780, 787-796, and 805-821; these read LGLTPLNTRHP, TSTF…NAAT, NATSPLTHPS, and SVLT…SPNI. Residue Asn787 is glycosylated (N-linked (GlcNAc...) asparagine). Residues 823–846 are compositionally biased toward low complexity; it reads PTGTLTSESSESPSTLSLPSVSGV. Polar residues-rich tracts occupy residues 847–860 and 869–888; these read KTTF…THLF and TSNP…RTTL. N-linked (GlcNAc...) asparagine glycans are attached at residues Asn930 and Asn957. Polar residues-rich tracts occupy residues 949–969, 1092–1101, 1124–1137, and 1301–1317; these read SQTN…TWPE, GSSTPGRTSQ, GTSS…TATH, and SGSS…NTGS. Disordered regions lie at residues 949–981, 1082–1101, 1121–1149, 1301–1378, 1593–1641, and 1704–1757; these read SQTN…LPSA, VSPS…RTSQ, PRDG…ARST, SGSS…NLTS, LGTQ…SSSS, and LSES…SPTT. The span at 1318 to 1328 shows a compositional bias: low complexity; the sequence is TWDPTTYITTT. Composition is skewed to polar residues over residues 1334 to 1347, 1368 to 1378, 1596 to 1613, 1621 to 1633, and 1704 to 1745; these read SSAQ…VRTL, PKISSSPNLTS, QGRS…STDT, GPTN…PMDN, and LSES…GSQM. An N-linked (GlcNAc...) asparagine glycan is attached at Asn1375. Asn1633 is a glycosylation site (N-linked (GlcNAc...) asparagine). Over residues 1746–1757 the composition is skewed to low complexity; it reads STSIPLTSSPTT. N-linked (GlcNAc...) asparagine glycans are attached at residues Asn1840, Asn1877, and Asn1890. The segment covering 1846–1908 has biased composition (polar residues); sequence DLSHGVHTSS…TEKSEVSSSI (63 aa). Disordered regions lie at residues 1846 to 1930, 2010 to 2033, 2064 to 2140, and 2153 to 2177; these read DLSH…PGNR, VSAS…YSSA, WPST…GASI, and RSDV…SAGT. Composition is skewed to low complexity over residues 2019–2033 and 2064–2085; these read SVSS…YSSA and WPST…NPSS. Over residues 2111–2132 the composition is skewed to polar residues; sequence HGPQNTAASTLNTDASSVTGLS. N-linked (GlcNAc...) asparagine glycans are attached at residues Asn2345 and Asn2375. Disordered regions lie at residues 2393 to 2455 and 2566 to 2591; these read PTSI…PFTI and SESK…ETSA. 2 stretches are compositionally biased toward low complexity: residues 2417-2429 and 2566-2583; these read TSTT…TSPS and SESK…TPTS. Asn2737 carries N-linked (GlcNAc...) asparagine glycosylation. Disordered stretches follow at residues 2789–2822, 2838–2885, 2901–3006, 3019–3052, 3083–3148, 3172–3235, 3251–3276, 3299–3392, 3415–3436, and 3462–3491; these read TTGS…LTMN, TATQ…TWGI, DTKS…AMTS, TGQA…TSRK, TLNM…ASSI, SQAA…PETT, ALGS…PTEN, GTPG…KTET, TSRS…TSGS, and VSLP…VTSP. A compositionally biased stretch (polar residues) spans 2803–2819; that stretch reads SGSTHSTGTKTFSSLPL. Positions 2864-2875 are enriched in low complexity; it reads SASSSPSKAFAS. 2 stretches are compositionally biased toward polar residues: residues 2876 to 2885 and 2901 to 2918; these read LTTAPPTWGI and DTKS…NTIP. Over residues 2919–2931 the composition is skewed to low complexity; sequence DSDASTASSSLSK. The segment covering 2942-2968 has biased composition (polar residues); that stretch reads MTSTKAISASSFQSTGFTETPEGSASP. Residues 3019-3035 are compositionally biased toward low complexity; it reads TGQAARSGSSSSPISLS. Positions 3041 to 3052 are enriched in polar residues; the sequence is SFLSPTASTSRK. Asn3085 is a glycosylation site (N-linked (GlcNAc...) asparagine). Residues 3107 to 3116 are compositionally biased toward low complexity; the sequence is TAETQTLTFT. Polar residues-rich tracts occupy residues 3117-3132 and 3172-3181; these read PSET…SPTE and SQAAQGNSTW. A glycan (N-linked (GlcNAc...) asparagine) is linked at Asn3178. Low complexity predominate over residues 3188–3200; sequence TGSSPAGTSPGSP. 2 stretches are compositionally biased toward polar residues: residues 3201–3214 and 3251–3261; these read EMST…SKEP and ALGSGSTSISH. The segment covering 3263-3274 has biased composition (low complexity); sequence PTGTTSPTKSPT. Polar residues-rich tracts occupy residues 3299–3342 and 3360–3383; these read GTPG…TTGM and VSLS…SSLT. 2 stretches are compositionally biased toward low complexity: residues 3424 to 3436 and 3477 to 3491; these read SSTS…TSGS and PSGG…VTSP. Asn3501 carries N-linked (GlcNAc...) asparagine glycosylation. Positions 3538 to 3555 are enriched in low complexity; the sequence is ISTTITTMGTNSISTTTP. Disordered stretches follow at residues 3538–3588, 3644–3672, 3794–3829, 3843–3879, 3914–3982, 4024–4056, 4094–4121, and 4138–4166; these read ISTT…STAA, TPSS…TAST, RSSG…GQVP, AKTP…TPSA, LESG…SPVV, MDTS…SSKR, AMQT…WTGT, and FSKG…VPIH. Composition is skewed to polar residues over residues 3812-3824 and 3848-3868; these read QTST…TSAH and ATFQ…TSDS. Positions 3916-3927 are enriched in low complexity; the sequence is SGTTSSPSWKSS. Residues 3946 to 3982 are compositionally biased toward polar residues; it reads PSTNTVETTGWVTSSEHASHSTIPAHSASSKLTSPVV. The segment covering 4026–4041 has biased composition (low complexity); it reads TSSTTQTSIISSPGST. Residues 4095-4121 are compositionally biased toward polar residues; sequence MQTSPPGATSLSAPTLDTSATASWTGT. Over residues 4152 to 4164 the composition is skewed to low complexity; it reads SVEETSSSSSLVP. Residues Asn4220, Asn4498, Asn4606, Asn4613, and Asn4624 are each glycosylated (N-linked (GlcNAc...) asparagine). Disordered regions lie at residues 4728–4748, 4845–4961, and 5026–5066; these read VKDV…PSSQ, HSTV…TRLS, and VSWT…KLSS. The segment covering 4856–4876 has biased composition (polar residues); it reads KVTSPNVTTSTMEDTTISRSI. N-linked (GlcNAc...) asparagine glycosylation occurs at Asn4861. 2 stretches are compositionally biased toward low complexity: residues 4877 to 4914 and 4924 to 4939; these read PKSS…ETST and TTEV…SSTS. Polar residues-rich tracts occupy residues 4944–4961 and 5026–5037; these read DQST…TRLS and VSWTSPPSVDKT. Over residues 5038–5047 the composition is skewed to low complexity; sequence SSPSSFLSSP. The span at 5048–5059 shows a compositional bias: polar residues; sequence AMTTPSLISSTL. N-linked (GlcNAc...) asparagine glycosylation is found at Asn5096, Asn5131, and Asn5228. 3 disordered regions span residues 5128–5149, 5221–5249, and 5271–5303; these read VKAN…ETPK, EVSS…DTFT, and TQAS…TVTQ. The span at 5221-5234 shows a compositional bias: polar residues; that stretch reads EVSSTGVNSSSKIS. Low complexity predominate over residues 5280 to 5293; the sequence is SHSTLPLDTSTTLS. Over residues 5294 to 5303 the composition is skewed to polar residues; sequence QGGTHSTVTQ. A glycan (N-linked (GlcNAc...) asparagine) is linked at Asn5320. 7 disordered regions span residues 5328–5365, 5381–5400, 5426–5507, 5519–5538, 5624–5654, 5675–5696, and 5727–5747; these read PVEE…PLPV, GTTS…SITH, NVGT…TNTA, ASRT…DRPT, PVEE…ESIP, LGTT…PTQE, and ISGH…KATS. 2 stretches are compositionally biased toward low complexity: residues 5333–5365 and 5381–5393; these read SSVS…PLPV and GTTS…SSPP. Asn5394 carries an N-linked (GlcNAc...) asparagine glycan. Polar residues-rich tracts occupy residues 5426 to 5441 and 5447 to 5485; these read NVGT…SSVL and SKAT…TASL. Asn5470 carries N-linked (GlcNAc...) asparagine glycosylation. 4 stretches are compositionally biased toward low complexity: residues 5495–5504, 5520–5532, 5633–5654, and 5675–5688; these read SEKTSSTTET, SRTE…TSIS, SLMS…ESIP, and LGTT…SSPP. Asn5689 carries N-linked (GlcNAc...) asparagine glycosylation. Residues 5727-5737 are compositionally biased toward polar residues; it reads ISGHESQSSVP. A glycan (N-linked (GlcNAc...) asparagine) is linked at Asn5863. 2 disordered regions span residues 5882–5931 and 6054–6078; these read STAS…SSPV and STST…TPEL. A compositionally biased stretch (polar residues) spans 5903 to 5916; that stretch reads TTTMSRSTKGVSWQ. Residues 5917 to 5928 are compositionally biased toward low complexity; the sequence is SPPSVEETSSPS. Positions 6054–6063 are enriched in polar residues; that stretch reads STSTPGSPET. Asn6088 carries N-linked (GlcNAc...) asparagine glycosylation. 6 disordered regions span residues 6122 to 6149, 6219 to 6251, 6399 to 6425, 6438 to 6459, 6497 to 6545, and 6682 to 6714; these read PASA…PLTI, NSLS…LVSV, SRTE…DTST, TKSE…SQGT, ISGT…TSLP, and TTGA…PDIS. 3 stretches are compositionally biased toward low complexity: residues 6134 to 6149, 6226 to 6251, and 6399 to 6410; these read SPEA…PLTI, PLLV…LVSV, and SRTELTSSSRTS. 2 stretches are compositionally biased toward polar residues: residues 6411–6425 and 6445–6459; these read IQGT…DTST and IATQ…SQGT. Over residues 6500-6523 the composition is skewed to low complexity; it reads TSPPSVEKTSSSSSLLSLPAITSP. Composition is skewed to polar residues over residues 6530 to 6545 and 6683 to 6699; these read LPES…TSLP and TGAT…SRRT. N-linked (GlcNAc...) asparagine glycosylation is present at Asn6732. Disordered stretches follow at residues 6800–6822, 6845–6865, and 6886–6939; these read SFSS…TLPK, TLGT…STSH, and TAAT…SETT. Positions 6848–6864 are enriched in low complexity; the sequence is TSPEPTTSSPPNLSSTS. Residue Asn6859 is glycosylated (N-linked (GlcNAc...) asparagine). Positions 6886 to 6905 are enriched in polar residues; it reads TAATNVETTSSGHGSQSSVL. The segment covering 6919–6938 has biased composition (low complexity); the sequence is TTSTMGHTTVSTSMSVSSET. Asn6961 carries N-linked (GlcNAc...) asparagine glycosylation. Disordered regions lie at residues 6981-7004, 7028-7107, 7143-7208, 7279-7302, 7320-7345, 7360-7427, 7437-7456, 7463-7503, 7527-7553, 7577-7597, 7726-7782, 7825-7849, 7908-7927, and 7970-8000; these read AEVS…QSTV, MTIP…ATTS, TSPE…TSKA, SRTE…MLPE, ESSE…TLDT, QRLP…SLLT, LDAS…STSV, EVTT…ETTK, SNTR…SEET, TEAI…TMSQ, ATTT…TTSS, LASS…TKMS, HTSP…TSST, and PSFS…SPLP. The span at 7028–7038 shows a compositional bias: polar residues; that stretch reads MTIPTQTGPSG. Low complexity predominate over residues 7039–7055; that stretch reads STSQDTLTLDTSTTKSQ. The span at 7057-7075 shows a compositional bias: polar residues; sequence KTHSTLTQRFPHSEMTTLM. Residues 7086-7105 show a composition bias toward low complexity; that stretch reads SSPSLENPSSLPSLLSLPAT. The segment covering 7166-7200 has biased composition (polar residues); that stretch reads GKDTTNTEAVHPSTNTAASNVEIPSSGHESPSSAL. Residues 7279–7298 show a composition bias toward low complexity; the sequence is SRTEVTSSSRTSISGSAEST. 3 stretches are compositionally biased toward polar residues: residues 7322–7345, 7360–7371, and 7390–7402; these read SEMT…TLDT, QRLPHSEITTLV, and SPPS…SAMI. Low complexity-rich tracts occupy residues 7403–7427 and 7439–7455; these read SPSP…SLLT and ASAE…SSTS. Over residues 7474-7484 the composition is skewed to polar residues; that stretch reads FSNTAVTKVGT. Over residues 7485 to 7494 the composition is skewed to low complexity; the sequence is SSSGHESPSS. Residues 7733 to 7749 are compositionally biased toward low complexity; that stretch reads GTSTEPGTSSSSSLSTT. Basic and acidic residues predominate over residues 7750 to 7765; that stretch reads SHERLTTYKDTAHTEA. Residues 7768 to 7782 show a composition bias toward polar residues; that stretch reads PSTNTGGTNVATTSS. Composition is skewed to low complexity over residues 7835-7846, 7915-7927, and 7973-8000; these read ESSGSEGTSSGT, TTQG…TSST, and SLMS…SPLP. Asn8029 and Asn8055 each carry an N-linked (GlcNAc...) asparagine glycan. Disordered regions lie at residues 8042–8078, 8111–8134, 8312–8331, 8342–8389, 8411–8472, 8604–8624, 8674–8741, and 8775–8880; these read EVTT…LADS, IQTE…GTSL, GISR…TSHE, TEDM…YTMG, TSSL…ISPD, MLRT…STSA, SPMA…TKVS, and TPLT…HSSP. Residues 8052 to 8078 are compositionally biased toward polar residues; the sequence is PSSNRTVTDVGTSSSGHESTSFVLADS. Over residues 8319–8328 the composition is skewed to low complexity; that stretch reads TSSTSNLSST. N-linked (GlcNAc...) asparagine glycosylation occurs at Asn8324. Residues 8345–8389 show a composition bias toward polar residues; sequence MQPSTHTAVTNVRTSISGHESQSSVLSDSETPKATSPMGTTYTMG. Over residues 8607–8624 the composition is skewed to low complexity; the sequence is TSSEPETSSPPNLSSTSA. N-linked (GlcNAc...) asparagine glycans are attached at residues Asn8618 and Asn8684. 2 stretches are compositionally biased toward polar residues: residues 8674 to 8740 and 8781 to 8810; these read SPMA…TTKV and GSAE…SSRA. The segment covering 8850-8880 has biased composition (low complexity); the sequence is TSPPSSLVSLSAVTSPSPLYSTPSESSHSSP. N-linked (GlcNAc...) asparagine glycosylation occurs at Asn8913. Disordered stretches follow at residues 8995–9018 and 9147–9168; these read ESTS…SATK and SLSS…DSIH. The N-linked (GlcNAc...) asparagine glycan is linked to Asn9202. Residues 9294–9307 are compositionally biased toward low complexity; the sequence is SISEETSSATEKST. The segment at 9294 to 9460 is disordered; it reads SISEETSSAT…TPSGSSHSSP (167 aa). 2 stretches are compositionally biased toward polar residues: residues 9308 to 9357 and 9374 to 9412; these read VLSS…STPL and SGAT…TTPM. A compositionally biased stretch (low complexity) spans 9431 to 9460; the sequence is SPPSSLVSSSSVTSPSPLYSTPSGSSHSSP. Residue Asn9493 is glycosylated (N-linked (GlcNAc...) asparagine). Disordered regions lie at residues 9611 to 9635, 9726 to 9753, 9771 to 9791, and 9869 to 9890; these read ATPE…AQST, SSSS…SPSS, VLDT…STSV, and TEPT…ETTS. Residues 9621 to 9635 are compositionally biased toward polar residues; the sequence is MPSSRTSIPGPAQST. Low complexity-rich tracts occupy residues 9774–9790 and 9881–9890; these read TSSE…SSTS and ETSTSEETTS. Residue Asn9785 is glycosylated (N-linked (GlcNAc...) asparagine). N-linked (GlcNAc...) asparagine glycans are attached at residues Asn10075 and Asn10173. 2 disordered regions span residues 10175–10218 and 10445–10469; these read SLDT…PPAS and TIRP…TGGT. Positions 10178 to 10193 are enriched in low complexity; sequence TSSVTPTNTPSSPGST. Over residues 10194-10212 the composition is skewed to polar residues; it reads HLLQSSKTDFTSSAKTSSP. Asn10510 carries an N-linked (GlcNAc...) asparagine glycan. Residues 10544–10573 show a composition bias toward polar residues; the sequence is SLGAETSTALPRTTPSVFNRESETTASLVS. Disordered stretches follow at residues 10544–10590 and 10689–10719; these read SLGA…DVSS and ETSS…PGAE. The N-linked (GlcNAc...) asparagine glycan is linked to Asn10700. The segment covering 10708 to 10719 has biased composition (polar residues); it reads ATPSIATSPGAE. Residue Asn10749 is glycosylated (N-linked (GlcNAc...) asparagine). Residues 10849 to 10860 show a composition bias toward polar residues; that stretch reads TTPSMTTSHGAE. Disordered stretches follow at residues 10849 to 10872, 10898 to 10926, and 11003 to 11036; these read TTPS…TVST, LSPG…TPTV, and LPTL…TVSP. Residues 10861–10872 show a composition bias toward low complexity; sequence SSSAVPTPTVST. Positions 11003–11018 are enriched in low complexity; sequence LPTLTLSPGEPETTPS. N-linked (GlcNAc...) asparagine glycosylation is present at Asn11053. Positions 11072-11092 are disordered; sequence SMATSHGAEASSAVPTPTVSP. N-linked (GlcNAc...) asparagine glycosylation is found at Asn11224 and Asn11263. Polar residues-rich tracts occupy residues 11269-11284 and 11358-11381; these read HPAE…TSRF and STTV…SIAT. Disordered stretches follow at residues 11269–11301, 11358–11400, 11508–11537, 11583–11724, 11836–11861, and 11913–11937; these read HPAE…SPEA, STTV…SPDV, KFSH…STTT, ETST…TSPR, SPTA…TSTM, and QTVT…FSRT. N-linked (GlcNAc...) asparagine glycosylation is present at Asn11367. Polar residues-rich tracts occupy residues 11583 to 11594, 11631 to 11651, and 11658 to 11672; these read ETSTTVSGTIPN, VTSQ…TLTP, and TTAS…QTGF. The N-linked (GlcNAc...) asparagine glycan is linked to Asn11594. Residues 11700-11717 show a composition bias toward low complexity; the sequence is PVSRTTSSFSHSSPDATP. Composition is skewed to polar residues over residues 11849–11861 and 11913–11928; these read PLST…TSTM and QTVT…SVTS. A run of 12 repeats spans residues 12067–12223, 12224–12381, 12382–12537, 12538–12692, 12693–12848, 12849–13004, 13005–13160, 13161–13316, 13317–13472, 13473–13628, 13629–13784, and 13785–13939. Positions 12067 to 13939 are 12 X approximate tandem repeats; that stretch reads AATVPFMVPF…FTINNLRYMA (1873 aa). In terms of domain architecture, SEA 1 spans 12072 to 12193; sequence FMVPFTLNFT…NSLYVNGFTH (122 aa). Asn12079, Asn12100, and Asn12116 each carry an N-linked (GlcNAc...) asparagine glycan. Cys12126 and Cys12146 form a disulfide bridge. A glycan (N-linked (GlcNAc...) asparagine) is linked at Asn12168. The segment at 12196–12226 is disordered; the sequence is SMPTTSTPGTSTVDVGTSGTPSSSPSPTTAG. The SEA 2 domain maps to 12228–12349; the sequence is LLMPFTLNFT…NSLYVNGFTH (122 aa). N-linked (GlcNAc...) asparagine glycans are attached at residues Asn12235 and Asn12272. An intrachain disulfide couples Cys12282 to Cys12302. A disordered region spans residues 12353–12376; that stretch reads VSTTSTPGTSTVDLRTSGTPSSLS. SEA domains lie at 12386–12507, 12542–12663, and 12697–12818; these read LLVP…GFTH and LLVL…GFTH. 3 N-linked (GlcNAc...) asparagine glycosylation sites follow: Asn12393, Asn12414, and Asn12430. Cys12440 and Cys12460 are disulfide-bonded. Residues Asn12549, Asn12570, and Asn12586 are each glycosylated (N-linked (GlcNAc...) asparagine). Cysteines 12596 and 12616 form a disulfide. 3 N-linked (GlcNAc...) asparagine glycosylation sites follow: Asn12704, Asn12725, and Asn12741. Cys12751 and Cys12771 are joined by a disulfide. Polar residues predominate over residues 12819–12834; that stretch reads QTSAPNTSTPGTSTVD. The disordered stretch occupies residues 12819–12849; the sequence is QTSAPNTSTPGTSTVDLGTSGTPSSLPSPTS. Residue Asn12824 is glycosylated (N-linked (GlcNAc...) asparagine). Residues 12835–12849 are compositionally biased toward low complexity; sequence LGTSGTPSSLPSPTS. One can recognise an SEA 6 domain in the interval 12853-12974; that stretch reads LLVPFTLNFT…NSLYVNGFTH (122 aa). Residues Asn12860, Asn12881, and Asn12897 are each glycosylated (N-linked (GlcNAc...) asparagine). A disulfide bridge connects residues Cys12907 and Cys12927. A compositionally biased stretch (polar residues) spans 12978-12990; the sequence is VAPTSTPGTSTVD. A disordered region spans residues 12978-13003; sequence VAPTSTPGTSTVDLGTSGTPSSLPSP. A compositionally biased stretch (low complexity) spans 12991–13003; sequence LGTSGTPSSLPSP. 2 consecutive SEA domains span residues 13009–13130 and 13165–13286; these read LLVP…GFTH and LLVP…GFTQ. 3 N-linked (GlcNAc...) asparagine glycosylation sites follow: Asn13016, Asn13037, and Asn13053. Cys13063 and Cys13083 are joined by a disulfide. Residues Asn13172 and Asn13193 are each glycosylated (N-linked (GlcNAc...) asparagine). A disulfide bridge connects residues Cys13219 and Cys13239. The span at 13291–13313 shows a compositional bias: polar residues; it reads PTTSTPGTFTVQPETSETPSSLP. The segment at 13291 to 13317 is disordered; the sequence is PTTSTPGTFTVQPETSETPSSLPGPTA. 2 consecutive SEA domains span residues 13321–13442 and 13477–13598; these read VLLP…GFTH and LLVL…GFTQ. N-linked (GlcNAc...) asparagine glycans are attached at residues Asn13328, Asn13349, and Asn13365. A disulfide bridge links Cys13375 with Cys13395. N-linked (GlcNAc...) asparagine glycosylation is found at Asn13484, Asn13505, and Asn13521. A disulfide bridge connects residues Cys13531 and Cys13551. Residues 13603–13621 are compositionally biased toward polar residues; sequence PTTSIPGTPTVDLGTSGTP. The disordered stretch occupies residues 13603–13625; it reads PTTSIPGTPTVDLGTSGTPVSKP. SEA domains lie at 13633-13754, 13789-13909, 13922-14043, and 14073-14193; these read LLVL…GFTH, LLIL…GFTH, SEEP…GYNE, and HLKT…GYAP. N-linked (GlcNAc...) asparagine glycans are attached at residues Asn13640 and Asn13661. Residues Cys13687 and Cys13707 are joined by a disulfide bond. N-linked (GlcNAc...) asparagine glycans are attached at residues Asn13733, Asn13744, Asn13796, Asn13816, Asn13832, Asn13929, and Asn13950. Cys13976 and Cys13996 form a disulfide bridge. N-linked (GlcNAc...) asparagine glycosylation is found at Asn14080 and Asn14100. A disulfide bridge connects residues Cys14126 and Cys14146. 6 N-linked (GlcNAc...) asparagine glycosylation sites follow: Asn14195, Asn14212, Asn14254, Asn14287, Asn14326, and Asn14363. 2 consecutive SEA domains span residues 14198 to 14309 and 14319 to 14438; these read IRGE…EMES and STQH…GYSP. Residues Cys14373 and Cys14393 are joined by a disulfide bond. Asn14417 and Asn14423 each carry an N-linked (GlcNAc...) asparagine glycan. The chain crosses the membrane as a helical span at residues 14452-14472; the sequence is FWAVILIGLAGLLGVITCLIC. Topologically, residues 14473–14507 are cytoplasmic; that stretch reads GVLVTTRRRKKEGEYNVQQQCPGYYQSHLDLEDLQ.

In terms of assembly, binds to MSLN. Binding to MSLN mediates heterotypic cell adhesion. This may contribute to the metastasis of ovarian cancer to the peritoneum by initiating cell attachment to the mesothelial epithelium via binding to MSLN. Heavily O-glycosylated; expresses both type 1 and type 2 core glycans. Post-translationally, heavily N-glycosylated; expresses primarily high mannose and complex bisecting type N-linked glycans. In terms of processing, may be phosphorylated. Phosphorylation of the intracellular C-terminal domain may induce proteolytic cleavage and the liberation of the extracellular domain into the extracellular space. May contain numerous disulfide bridges. Association of several molecules of the secreted form may occur through interchain disulfide bridges providing an extraordinarily large gel-like matrix in the extracellular space or in the lumen of secretory ducts. As to expression, expressed in corneal and conjunctival epithelia (at protein level). Overexpressed in ovarian carcinomas and ovarian low malignant potential (LMP) tumors as compared to the expression in normal ovarian tissue and ovarian adenomas.

Its subcellular location is the cell membrane. The protein localises to the secreted. It is found in the extracellular space. Its function is as follows. Thought to provide a protective, lubricating barrier against particles and infectious agents at mucosal surfaces. The chain is Mucin-16 from Homo sapiens (Human).